Reading from the N-terminus, the 356-residue chain is 3-isopropylmalate dehydrogenase (356 aa).

4 residues coordinate substrate: arginine 95, arginine 105, arginine 133, and aspartate 223. Mg(2+) is bound by residues aspartate 223, aspartate 247, and aspartate 251. NAD(+) is bound at residue 281-293 (GSAPDIAGQNKAN).

This sequence belongs to the isocitrate and isopropylmalate dehydrogenases family. LeuB type 1 subfamily. As to quaternary structure, homodimer. Mg(2+) serves as cofactor. Requires Mn(2+) as cofactor.

The protein localises to the cytoplasm. The enzyme catalyses (2R,3S)-3-isopropylmalate + NAD(+) = 4-methyl-2-oxopentanoate + CO2 + NADH. The protein operates within amino-acid biosynthesis; L-leucine biosynthesis; L-leucine from 3-methyl-2-oxobutanoate: step 3/4. Catalyzes the oxidation of 3-carboxy-2-hydroxy-4-methylpentanoate (3-isopropylmalate) to 3-carboxy-4-methyl-2-oxopentanoate. The product decarboxylates to 4-methyl-2 oxopentanoate. The chain is 3-isopropylmalate dehydrogenase from Neisseria meningitidis serogroup A / serotype 4A (strain DSM 15465 / Z2491).